The primary structure comprises 347 residues: MHRRRLALGLGFCLLAGTSLSVLWVYLENWLPVSYVPYYLPCPEIFNMKLHYKREKPLQPVVWSQYPQPKLLEHRPTQLLTLTPWLAPIVSEGTFNPELLQHIYQPLNLTIGVTVFAVGKYTHFIQSFLESAEEFFMRGYRVHYYIFTDNPAAVPGVPLGPHRLLSSIPIQGHSHWEETSMRRMETISQHIAKRAHREVDYLFCLDVDMVFRNPWGPETLGDLVAAIHPSYYAVPRQQFPYERRRVSTAFVADSEGDFYYGGAVFGGQVARVYEFTRGCHMAILADKANGIMAAWREESHLNRHFISNKPSKVLSPEYLWDDRKPQPPSLKLIRFSTLDKDISCLRS.

Residues 1-5 lie on the Cytoplasmic side of the membrane; the sequence is MHRRR. The helical; Signal-anchor for type II membrane protein transmembrane segment at 6-26 threads the bilayer; that stretch reads LALGLGFCLLAGTSLSVLWVY. The Lumenal portion of the chain corresponds to 27–347; sequence LENWLPVSYV…LDKDISCLRS (321 aa). N-linked (GlcNAc...) asparagine glycosylation occurs at N108. Substrate is bound by residues 116 to 121, 206 to 208, and 228 to 231; these read FAVGKY, DVD, and HPSY. Mn(2+) contacts are provided by D206 and D208. E298 acts as the Nucleophile in catalysis.

Belongs to the glycosyltransferase 6 family. Mn(2+) serves as cofactor. As to expression, widely expressed. Expressed at higher level in placenta, ovary and peripheral blood leukocyte, whereas it is weakly expressed in liver, thymus, and testis. Expressed in bone marrow erythroid cells.

It localises to the golgi apparatus membrane. It functions in the pathway protein modification; protein glycosylation. In terms of biological role, has lost the ability to synthesize Forssman glycolipid antigen (FORS1/FG). Might have acquired an alternative function in glycosphingolipid metabolism, but it remains to be established. It appears to have drifted more slowly than confirmed pseudogenes in the glycosyltransferase 6 family, suggesting that it has remained under evolutionary pressure. This Homo sapiens (Human) protein is Globoside alpha-1,3-N-acetylgalactosaminyltransferase 1.